The chain runs to 419 residues: UDP-N-acetylglucosamine 1-carboxyvinyltransferase (419 aa).

Residue Lys-22–Asn-23 participates in phosphoenolpyruvate binding. Arg-95 contributes to the UDP-N-acetyl-alpha-D-glucosamine binding site. The active-site Proton donor is the Cys-119. At Cys-119 the chain carries 2-(S-cysteinyl)pyruvic acid O-phosphothioketal. Residues Lys-164–Val-167, Asp-308, and Ile-330 each bind UDP-N-acetyl-alpha-D-glucosamine.

The protein belongs to the EPSP synthase family. MurA subfamily.

Its subcellular location is the cytoplasm. It carries out the reaction phosphoenolpyruvate + UDP-N-acetyl-alpha-D-glucosamine = UDP-N-acetyl-3-O-(1-carboxyvinyl)-alpha-D-glucosamine + phosphate. Its pathway is cell wall biogenesis; peptidoglycan biosynthesis. In terms of biological role, cell wall formation. Adds enolpyruvyl to UDP-N-acetylglucosamine. In Rickettsia felis (strain ATCC VR-1525 / URRWXCal2) (Rickettsia azadi), this protein is UDP-N-acetylglucosamine 1-carboxyvinyltransferase.